The sequence spans 314 residues: Malate dehydrogenase (314 aa).

NAD(+) is bound by residues 7–13 and Asp34; that span reads GAAGGIG. Substrate is bound by residues Arg81 and Arg87. NAD(+) is bound by residues Asn94 and 117 to 119; that span reads ITN. Asn119 and Arg153 together coordinate substrate. His177 serves as the catalytic Proton acceptor. Met230 is an NAD(+) binding site.

This sequence belongs to the LDH/MDH superfamily. MDH type 1 family. Homodimer.

It catalyses the reaction (S)-malate + NAD(+) = oxaloacetate + NADH + H(+). Its function is as follows. Catalyzes the reversible oxidation of malate to oxaloacetate. The sequence is that of Malate dehydrogenase from Glaesserella parasuis serovar 5 (strain SH0165) (Haemophilus parasuis).